The chain runs to 346 residues: tRNA N6-adenosine threonylcarbamoyltransferase (346 aa).

Residues H111 and H115 each coordinate Fe cation. Substrate-binding positions include 134-138 (LVSGG), D167, G180, and N279. D307 is a binding site for Fe cation.

The protein belongs to the KAE1 / TsaD family. Fe(2+) is required as a cofactor.

Its subcellular location is the cytoplasm. The enzyme catalyses L-threonylcarbamoyladenylate + adenosine(37) in tRNA = N(6)-L-threonylcarbamoyladenosine(37) in tRNA + AMP + H(+). Required for the formation of a threonylcarbamoyl group on adenosine at position 37 (t(6)A37) in tRNAs that read codons beginning with adenine. Is involved in the transfer of the threonylcarbamoyl moiety of threonylcarbamoyl-AMP (TC-AMP) to the N6 group of A37, together with TsaE and TsaB. TsaD likely plays a direct catalytic role in this reaction. This chain is tRNA N6-adenosine threonylcarbamoyltransferase, found in Burkholderia cenocepacia (strain HI2424).